Consider the following 393-residue polypeptide: MAGRIQNTIRNFLDSESSGGLLLIASAAAALLVANSQLSEAYFGALHAYLGPLSVQHWVNDALMAVFFLMVGLEIKREMVDGHLSSWPRRILPGAAAAAGMAVPALVYLAFNLNNGAAHGWAIPAATDIAFALGVISLLGPRVPTSLKVFLAALAIIDDLGAVIVIGLFYTTGVSLMDLGLAAAGVAALVALNLSGVKRLTPYLLLGLVLWFFTYRSGVHATIAGVLLALTIPIKRTPAKPEATVSESPLHLLEHSLIKPVSFIIVPIFGFANAGVSFSGLGMEAFFAPVTMGVAAGLAIGKLVGIFGAVLLLVKTGIVGLPAGASWPQMLGTTLLCGIGFTMSLFISLLAFDDVLLQNEAKIGILIGSLVAGLAGFIVLRFSKRADGRNFSQ.

A run of 11 helical transmembrane segments spans residues 18 to 38, 53 to 73, 91 to 111, 120 to 140, 149 to 169, 172 to 192, 208 to 228, 263 to 283, 294 to 314, 332 to 352, and 363 to 383; these read SGGLLLIASAAAALLVANSQL, LSVQHWVNDALMAVFFLMVGL, ILPGAAAAAGMAVPALVYLAF, GWAIPAATDIAFALGVISLLG, VFLAALAIIDDLGAVIVIGLF, TGVSLMDLGLAAAGVAALVAL, LVLWFFTYRSGVHATIAGVLL, FIIVPIFGFANAGVSFSGLGM, VAAGLAIGKLVGIFGAVLLLV, GTTLLCGIGFTMSLFISLLAF, and IGILIGSLVAGLAGFIVLRFS.

It belongs to the NhaA Na(+)/H(+) (TC 2.A.33) antiporter family.

It is found in the cell inner membrane. The enzyme catalyses Na(+)(in) + 2 H(+)(out) = Na(+)(out) + 2 H(+)(in). Its function is as follows. Na(+)/H(+) antiporter that extrudes sodium in exchange for external protons. The chain is Na(+)/H(+) antiporter NhaA 2 from Brucella anthropi (strain ATCC 49188 / DSM 6882 / CCUG 24695 / JCM 21032 / LMG 3331 / NBRC 15819 / NCTC 12168 / Alc 37) (Ochrobactrum anthropi).